Reading from the N-terminus, the 591-residue chain is Beta-fructofuranosidase, insoluble isoenzyme CWINV4 (591 aa).

The signal sequence occupies residues 1 to 22; it reads MAISNVISVLLLLLVLINLSNQ. Residues 61-64, Gln80, Trp88, and 123-124 contribute to the substrate site; these read WIND and WS. The active site involves Asp64. N-linked (GlcNAc...) asparagine glycans are attached at residues Asn145 and Asn182. Residues 187-188, Glu242, and Asp276 each bind substrate; that span reads RD. Asn336, Asn472, and Asn565 each carry an N-linked (GlcNAc...) asparagine glycan. A disulfide bond links Cys436 and Cys484.

The protein belongs to the glycosyl hydrolase 32 family. Expressed in flowers, and seeds, and, to a lower extent, in seedlings.

The protein localises to the secreted. It localises to the extracellular space. It is found in the apoplast. The protein resides in the cell wall. It carries out the reaction Hydrolysis of terminal non-reducing beta-D-fructofuranoside residues in beta-D-fructofuranosides.. The sequence is that of Beta-fructofuranosidase, insoluble isoenzyme CWINV4 (CWINV4) from Arabidopsis thaliana (Mouse-ear cress).